Consider the following 2004-residue polypeptide: Immunoglobulin A1 protease (2004 aa).

A signal peptide spans 1-42; sequence MEKYFGEKQERFSFRKLSVGLVSATISSLFFMSVLASSSVDA. Residues 43-99 constitute a propeptide that is removed on maturation; the sequence is QETAGVHYKYVADSELSSEEKKQLVYDIPTYVENDDETYYLVYKLNSQNQLAELPNT. An LPXTG sorting signal motif is present at residues 96–100; it reads LPNTG. T99 carries the post-translational modification Pentaglycyl murein peptidoglycan amidated threonine. 2 consecutive transmembrane segments (helical) span residues 106–125 and 132–154; these read QALVAGASLAAMGILIFAVS and KTVLHLVLVAGIGNGVLVSVHAL. Over 155-2004 the chain is Extracellular; sequence ENHLLLNYNT…FRSSIFENKK (1850 aa). 4 disordered regions span residues 194–213, 235–305, 373–394, and 422–720; these read TTSESEVSNQKSSVATPTKQ, QEQT…NPQD, EIVSTSTTAPSPRIVEKGTKKT, and PELP…PEKT. Polar residues-rich tracts occupy residues 197-213 and 235-246; these read ESEVSNQKSSVATPTKQ and QEQTPVSSTKPT. Residues 276-296 are compositionally biased toward basic and acidic residues; the sequence is LAEHKNLETKKEEKISPKEKT. Residues 314-393 form the G5 domain; it reads KPELLYREET…PRIVEKGTKK (80 aa). A run of 3 repeats spans residues 419 to 435, 436 to 452, and 453 to 469. Residues 419 to 469 are 3 X 17 AA approximate tandem repeats; that stretch reads AIQPELPEAVVSDKGEPEVQPTLPEAVVTDKGETEVQPESPDTVVSDKGEP. Over residues 485 to 511 the composition is skewed to basic and acidic residues; the sequence is VKPETPVEKTKEQGPEKTEEVPVKPTE. 2 stretches are compositionally biased toward polar residues: residues 516 to 529 and 538 to 572; these read NPNEGTTEGTSIQE and EESTTNSEKVSPDTSSKNTGEVSSNPSDSTTSVGE. Basic and acidic residues predominate over residues 574 to 591; that stretch reads NKPEHNDSKNENSEKTVE. Composition is skewed to polar residues over residues 618–639 and 648–681; these read EETQTNSGKIANENTGEVSNKP and ESNQPEKNGTATKPENSGNTTSENGQTEPEPSNG. Low complexity predominate over residues 682-699; that stretch reads NSTEDVSTESNTSNSNGN. A compositionally biased stretch (basic and acidic residues) spans 700-720; that stretch reads EEIKQENELDPDKKVEEPEKT. H1645 provides a ligand contact to Zn(2+). E1646 is a catalytic residue. 2 residues coordinate Zn(2+): H1649 and E1669.

This sequence belongs to the peptidase M26 family. Zn(2+) serves as cofactor. Post-translationally, the Gram-positive cell-wall anchor motif LPXTG is located in the N-terminal part, in contrast to such motifs in other known streptococcal and staphylococcal proteins. The protease could be cleaved by the sortase and anchored in the membrane via the two potential N-terminal transmembrane domains, whereas the propeptide located prior to the LPXTG motif would remain attached to the cell wall peptidoglycan by an amide bond.

It is found in the secreted. The protein resides in the cell wall. Its subcellular location is the membrane. The enzyme catalyses Cleavage of Pro-|-Thr bond in the hinge region of the heavy chain of human IgA.. In terms of biological role, zinc metalloproteinase which cleaves human immunoglobulin A1 (IgA1) in the hinge region, rendering it less efficient in coating the surface of colonizing or invading pneumococci. Strongly contributes to virulence in mice. May be responsible for pneumococcal infection and is potentially involved in distinct stages of pneumococcal disease. This Streptococcus pneumoniae serotype 4 (strain ATCC BAA-334 / TIGR4) protein is Immunoglobulin A1 protease (iga).